A 237-amino-acid polypeptide reads, in one-letter code: Ribonuclease PH (237 aa).

Phosphate contacts are provided by residues arginine 86 and glycine 124–arginine 126.

This sequence belongs to the RNase PH family. Homohexameric ring arranged as a trimer of dimers.

The catalysed reaction is tRNA(n+1) + phosphate = tRNA(n) + a ribonucleoside 5'-diphosphate. Phosphorolytic 3'-5' exoribonuclease that plays an important role in tRNA 3'-end maturation. Removes nucleotide residues following the 3'-CCA terminus of tRNAs; can also add nucleotides to the ends of RNA molecules by using nucleoside diphosphates as substrates, but this may not be physiologically important. Probably plays a role in initiation of 16S rRNA degradation (leading to ribosome degradation) during starvation. The protein is Ribonuclease PH of Methylocella silvestris (strain DSM 15510 / CIP 108128 / LMG 27833 / NCIMB 13906 / BL2).